The chain runs to 355 residues: Alanine racemase (355 aa).

Lys34 functions as the Proton acceptor; specific for D-alanine in the catalytic mechanism. Lys34 is modified (N6-(pyridoxal phosphate)lysine). Arg133 provides a ligand contact to substrate. Tyr249 (proton acceptor; specific for L-alanine) is an active-site residue. Met297 is a binding site for substrate.

Belongs to the alanine racemase family. Pyridoxal 5'-phosphate is required as a cofactor.

The catalysed reaction is L-alanine = D-alanine. It participates in amino-acid biosynthesis; D-alanine biosynthesis; D-alanine from L-alanine: step 1/1. Catalyzes the interconversion of L-alanine and D-alanine. May also act on other amino acids. This is Alanine racemase (alr) from Rickettsia canadensis (strain McKiel).